A 309-amino-acid polypeptide reads, in one-letter code: MVGFKATDVPPTATVKFLGAGTAACIADLITFPLDTAKVRLQIQGERQGPVRAAASAQYRGVLCTILTMVRTEGPRSLYSGLVAGLQRQMSFASVRIGLYDSVKQFYTKGSEHAGIGSRLLAGSTTGALAVAVAQPTDVVKVRFQAQARAGSGRRYQSTVDAYKTIAREEGFRGLWKGTSPNVARNAIVNCAELVTYDLIKDALLKANLMTDDLPCHFTSAFGAGFCTTVIASPVDVVKTRYMNSALGQYSSAGHCALTMLQKEGPRAFYKGFMPSFLRLGSWNVVMFVTYEQLKRALMAACTSREAPF.

The Mitochondrial intermembrane segment spans residues 1–16; it reads MVGFKATDVPPTATVK. Solcar repeat units lie at residues 11 to 106, 114 to 203, and 212 to 297; these read PTAT…VKQF, AGIG…IKDA, and DDLP…LKRA. Residues 16-63 form an important for interaction with long-chain fatty acids region; sequence KFLGAGTAACIADLITFPLDTAKVRLQIQGERQGPVRAAASAQYRGVL. A helical transmembrane segment spans residues 17–40; sequence FLGAGTAACIADLITFPLDTAKVR. At 41–77 the chain is on the mitochondrial matrix side; that stretch reads LQIQGERQGPVRAAASAQYRGVLCTILTMVRTEGPRS. Residues 78–103 form a helical membrane-spanning segment; it reads LYSGLVAGLQRQMSFASVRIGLYDSV. The Mitochondrial intermembrane portion of the chain corresponds to 104-119; that stretch reads KQFYTKGSEHAGIGSR. Residues 120-145 form a helical membrane-spanning segment; the sequence is LLAGSTTGALAVAVAQPTDVVKVRFQ. Over 146–173 the chain is Mitochondrial matrix; the sequence is AQARAGSGRRYQSTVDAYKTIAREEGFR. A helical transmembrane segment spans residues 174 to 199; that stretch reads GLWKGTSPNVARNAIVNCAELVTYDL. Topologically, residues 200-217 are mitochondrial intermembrane; it reads IKDALLKANLMTDDLPCH. A helical membrane pass occupies residues 218–242; the sequence is FTSAFGAGFCTTVIASPVDVVKTRY. Over 243–268 the chain is Mitochondrial matrix; that stretch reads MNSALGQYSSAGHCALTMLQKEGPRA. The helical transmembrane segment at 269–294 threads the bilayer; it reads FYKGFMPSFLRLGSWNVVMFVTYEQL. An important for interaction with long-chain fatty acids region spans residues 278 to 285; it reads LRLGSWNV. At 295–309 the chain is on the mitochondrial intermembrane side; that stretch reads KRALMAACTSREAPF.

Belongs to the mitochondrial carrier (TC 2.A.29) family. As to quaternary structure, homotetramer. Adopts an asymmetrical dimer of dimers functional form. Interacts with MICU1 (when methylated); leading to decrease the calcium sensitivity of MICU1.

It localises to the mitochondrion inner membrane. It catalyses the reaction L-aspartate(out) + phosphate(in) + H(+)(in) = L-aspartate(in) + phosphate(out) + H(+)(out). The enzyme catalyses oxaloacetate(out) + phosphate(in) + H(+)(in) = oxaloacetate(in) + phosphate(out) + H(+)(out). The catalysed reaction is (S)-malate(out) + phosphate(in) + H(+)(in) = (S)-malate(in) + phosphate(out) + H(+)(out). It carries out the reaction malonate(out) + phosphate(in) + H(+)(in) = malonate(in) + phosphate(out) + H(+)(out). It catalyses the reaction sulfate(out) + phosphate(in) + H(+)(in) = sulfate(in) + phosphate(out) + H(+)(out). The enzyme catalyses (S)-malate(out) = (S)-malate(in). The catalysed reaction is L-aspartate(out) = L-aspartate(in). It carries out the reaction phosphate(in) = phosphate(out). It catalyses the reaction chloride(in) = chloride(out). The enzyme catalyses H(+)(in) = H(+)(out). The catalysed reaction is a long-chain fatty acid(out) = a long-chain fatty acid(in). In terms of biological role, antiporter that exports dicarboxylate intermediates of the Krebs cycle in exchange for phosphate plus a proton across the inner membrane of mitochondria, a process driven by mitochondrial motive force with an overall impact on glycolysis, glutaminolysis and glutathione-dependent redox balance. Continuous export of oxaloacetate and related four-carbon dicarboxylates from mitochondrial matrix into the cytosol negatively regulates the oxidation of acetyl-CoA substrates via the Krebs cycle lowering the ATP/ADP ratio and reactive oxygen species (ROS) production. May mediate inducible proton entry into the mitochondrial matrix affecting ATP turnover as a protection mechanism against oxidative stress. The proton currents are most likely associated with fatty acid flipping across the inner membrane of mitochondria in a metabolic process regulated by free fatty acids and purine nucleotides. Regulates the use of glucose as a source of energy. Required for glucose-induced DRP1-dependent mitochondrial fission and neuron activation in the ventromedial nucleus of the hypothalamus (VMH). This mitochondrial adaptation mechanism modulates the VMH pool of glucose-excited neurons with an impact on systemic glucose homeostasis. Regulates ROS levels and metabolic reprogramming of macrophages during the resolution phase of inflammation. Attenuates ROS production in response to IL33 to preserve the integrity of the Krebs cycle required for persistent production of itaconate and subsequent GATA3-dependent differentiation of inflammation-resolving alternatively activated macrophages. Can unidirectionally transport anions including L-malate, L-aspartate, phosphate and chloride ions. Does not mediate adaptive thermogenesis. The protein is Dicarboxylate carrier UCP2 (UCP2) of Canis lupus familiaris (Dog).